The following is a 230-amino-acid chain: Ion-translocating oxidoreductase complex subunit E (230 aa).

The next 6 helical transmembrane spans lie at A18–A38, L39–L59, T63–V83, L86–V106, W125–L145, and P182–V202.

This sequence belongs to the NqrDE/RnfAE family. As to quaternary structure, the complex is composed of six subunits: RsxA, RsxB, RsxC, RsxD, RsxE and RsxG.

Its subcellular location is the cell inner membrane. Functionally, part of a membrane-bound complex that couples electron transfer with translocation of ions across the membrane. Required to maintain the reduced state of SoxR. The protein is Ion-translocating oxidoreductase complex subunit E of Salmonella arizonae (strain ATCC BAA-731 / CDC346-86 / RSK2980).